The primary structure comprises 440 residues: WAS/WASL-interacting protein family member 2 (440 aa).

The segment covering Met-1–Thr-18 has biased composition (pro residues). The segment at Met-1–Gly-36 is disordered. The 18-residue stretch at Gly-36–Val-53 folds into the WH2 domain. Residue Arg-37 is modified to Asymmetric dimethylarginine. Residues Lys-49–Lys-52 are binds actin. Disordered stretches follow at residues Ile-56–Thr-387 and Arg-419–Arg-440. The segment covering Pro-116–Arg-133 has biased composition (low complexity). The segment covering Arg-161–His-172 has biased composition (polar residues). 4 stretches are compositionally biased toward pro residues: residues Ala-176 to Leu-193, Glu-222 to Pro-236, Ala-249 to Pro-262, and Arg-356 to Leu-378.

Belongs to the verprolin family. As to quaternary structure, interacts with WASL and WASP, and this interaction results in cytoplasmic relocation of these two proteins along actin filaments. Interacts with NCK2 resulting in the localization to sites of focal adhesions. No interaction was seen with WASF2 and WASF3. Expressed mainly in brain, colon, lung and stomach (at protein level). Ubiquitously expressed, with high expression in brain, kidney, lung, and placenta.

It is found in the cytoplasm. The protein localises to the cytoskeleton. Plays an active role in the formation of cell surface protrusions downstream of activated PDGFB receptors. Plays an important role in actin-microspike formation through cooperation with WASL. May cooperate with WASP and WASL to induce mobilization and reorganization of the actin filament system. The protein is WAS/WASL-interacting protein family member 2 (WIPF2) of Homo sapiens (Human).